The sequence spans 75 residues: SPbeta prophage-derived uncharacterized protein YomT (75 aa).

The polypeptide is SPbeta prophage-derived uncharacterized protein YomT (yomT) (Bacillus subtilis (strain 168)).